Here is a 313-residue protein sequence, read N- to C-terminus: Porphobilinogen deaminase (313 aa).

S-(dipyrrolylmethanemethyl)cysteine is present on Cys-241.

It belongs to the HMBS family. Monomer. Dipyrromethane serves as cofactor.

It carries out the reaction 4 porphobilinogen + H2O = hydroxymethylbilane + 4 NH4(+). It participates in porphyrin-containing compound metabolism; protoporphyrin-IX biosynthesis; coproporphyrinogen-III from 5-aminolevulinate: step 2/4. In terms of biological role, tetrapolymerization of the monopyrrole PBG into the hydroxymethylbilane pre-uroporphyrinogen in several discrete steps. The protein is Porphobilinogen deaminase of Idiomarina loihiensis (strain ATCC BAA-735 / DSM 15497 / L2-TR).